Consider the following 124-residue polypeptide: Large ribosomal subunit protein bL12 (124 aa).

Residues 93 to 124 are disordered; it reads GAPSTVKEGASKDEAEEAKKKLEEAGASVELK. The span at 101–116 shows a compositional bias: basic and acidic residues; that stretch reads GASKDEAEEAKKKLEE.

Belongs to the bacterial ribosomal protein bL12 family. Homodimer. Part of the ribosomal stalk of the 50S ribosomal subunit. Forms a multimeric L10(L12)X complex, where L10 forms an elongated spine to which 2 to 4 L12 dimers bind in a sequential fashion. Binds GTP-bound translation factors.

Functionally, forms part of the ribosomal stalk which helps the ribosome interact with GTP-bound translation factors. Is thus essential for accurate translation. This is Large ribosomal subunit protein bL12 from Marinobacter nauticus (strain ATCC 700491 / DSM 11845 / VT8) (Marinobacter aquaeolei).